We begin with the raw amino-acid sequence, 358 residues long: Probable ABC transporter periplasmic-binding protein y4fP (358 aa).

The signal sequence occupies residues 1–46 (MRNVIKLTWSRRKRSASLDKGENIMKLAFAFATAAIVVAAAFPALA).

The protein belongs to the bacterial solute-binding protein 1 family.

The protein resides in the periplasm. Its function is as follows. Probably part of the binding-protein-dependent transport system y4fNOP. The sequence is that of Probable ABC transporter periplasmic-binding protein y4fP from Sinorhizobium fredii (strain NBRC 101917 / NGR234).